The chain runs to 199 residues: 7-methyl-GTP pyrophosphatase (199 aa).

Asp-76 acts as the Proton acceptor in catalysis.

The protein belongs to the Maf family. YceF subfamily. The cofactor is a divalent metal cation.

It localises to the cytoplasm. It carries out the reaction N(7)-methyl-GTP + H2O = N(7)-methyl-GMP + diphosphate + H(+). In terms of biological role, nucleoside triphosphate pyrophosphatase that hydrolyzes 7-methyl-GTP (m(7)GTP). May have a dual role in cell division arrest and in preventing the incorporation of modified nucleotides into cellular nucleic acids. The protein is 7-methyl-GTP pyrophosphatase of Brucella abortus biovar 1 (strain 9-941).